A 162-amino-acid chain; its full sequence is Putative 4-hydroxy-4-methyl-2-oxoglutarate aldolase (162 aa).

Substrate-binding positions include 75-78 and Arg-97; that span reads GDML. Position 98 (Asp-98) interacts with a divalent metal cation.

Belongs to the class II aldolase/RraA-like family. Homotrimer. It depends on a divalent metal cation as a cofactor.

The enzyme catalyses 4-hydroxy-4-methyl-2-oxoglutarate = 2 pyruvate. It catalyses the reaction oxaloacetate + H(+) = pyruvate + CO2. Its function is as follows. Catalyzes the aldol cleavage of 4-hydroxy-4-methyl-2-oxoglutarate (HMG) into 2 molecules of pyruvate. Also contains a secondary oxaloacetate (OAA) decarboxylase activity due to the common pyruvate enolate transition state formed following C-C bond cleavage in the retro-aldol and decarboxylation reactions. The polypeptide is Putative 4-hydroxy-4-methyl-2-oxoglutarate aldolase (Ectopseudomonas mendocina (strain ymp) (Pseudomonas mendocina)).